Here is a 104-residue protein sequence, read N- to C-terminus: Vesicle-associated membrane protein 3 (104 aa).

Positions 1–23 (MTTNAPAGSSAAAGSSRRLQQTQ) are disordered. The Cytoplasmic segment spans residues 1-81 (MTTNAPAGSS…KRKYWWKNCK (81 aa)). A compositionally biased stretch (low complexity) spans 7-16 (AGSSAAAGSS). Positions 18 to 78 (RLQQTQNQVD…AKLKRKYWWK (61 aa)) constitute a v-SNARE coiled-coil homology domain. Glycyl lysine isopeptide (Lys-Gly) (interchain with G-Cter in ubiquitin) cross-links involve residues K70, K72, and K81. A helical; Anchor for type IV membrane protein membrane pass occupies residues 82–102 (MWAIGITVVVIIIIIIVVWSI). At 103-104 (SS) the chain is on the vesicular side.

This sequence belongs to the synaptobrevin family. In terms of assembly, interacts with POPDC1 (via the C-terminus cytoplasmic tail). Interacts with BCAP31; involved in VAMP3 export from the endoplasmic reticulum. Interacts with BAIAP3; this interaction is increased in the presence of calcium. Interacts with PICALM. Post-translationally, ubiquitinated by RNF167 at Lys-70, Lys-72 and Lys-81, regulating the recycling endosome pathway.

It localises to the early endosome membrane. It is found in the recycling endosome membrane. The protein localises to the synapse. Its subcellular location is the synaptosome. SNARE involved in vesicular transport from the late endosomes to the trans-Golgi network. The protein is Vesicle-associated membrane protein 3 (VAMP3) of Bos taurus (Bovine).